Reading from the N-terminus, the 283-residue chain is Calpastatin (283 aa).

Residues 1–15 (MNPTETKAIPVSQQM) are compositionally biased toward polar residues. Disordered stretches follow at residues 1 to 186 (MNPT…SDPM) and 212 to 283 (NEGI…KVEK). The segment covering 21 to 30 (PNKKKHKKQA) has biased composition (basic residues). Residue Lys32 forms a Glycyl lysine isopeptide (Lys-Gly) (interchain with G-Cter in SUMO2) linkage. Residues 46–65 (VVHEKKSQEGKPKEHTEQKS) show a composition bias toward basic and acidic residues. An N6-acetyllysine modification is found at Lys50. Phosphoserine is present on Ser87. Residues 107-122 (VSAGGESVAGVAATSG) are compositionally biased toward low complexity. Ser133 bears the Phosphoserine mark. Thr135 is subject to Phosphothreonine. The Inhibitory domain 1 repeat unit spans residues 170–222 (IEEENTTYTGPEVSDPMSSTYIEELGKREVTIPPKYRELLAKNEGITGPPADS). Phosphoserine occurs at positions 222 and 243. Residues 249–258 (KKTEKEESTE) show a composition bias toward basic and acidic residues.

This sequence belongs to the protease inhibitor I27 (calpastatin) family.

Functionally, specific inhibition of calpain (calcium-dependent cysteine protease). Plays a key role in postmortem tenderization of meat and have been proposed to be involved in muscle protein degradation in living tissue. This is Calpastatin (CAST) from Chlorocebus aethiops (Green monkey).